The chain runs to 419 residues: Imidazolonepropionase (419 aa).

Fe(3+) contacts are provided by histidine 82 and histidine 84. Zn(2+) is bound by residues histidine 82 and histidine 84. 3 residues coordinate 4-imidazolone-5-propanoate: arginine 91, tyrosine 154, and histidine 187. N-formimidoyl-L-glutamate is bound at residue tyrosine 154. Fe(3+) is bound at residue histidine 252. Histidine 252 provides a ligand contact to Zn(2+). Glutamate 255 is a 4-imidazolone-5-propanoate binding site. A Fe(3+)-binding site is contributed by aspartate 326. Aspartate 326 is a binding site for Zn(2+). 2 residues coordinate N-formimidoyl-L-glutamate: asparagine 328 and glycine 330. Serine 331 lines the 4-imidazolone-5-propanoate pocket.

It belongs to the metallo-dependent hydrolases superfamily. HutI family. The cofactor is Zn(2+). Fe(3+) is required as a cofactor.

The protein localises to the cytoplasm. It catalyses the reaction 4-imidazolone-5-propanoate + H2O = N-formimidoyl-L-glutamate. It participates in amino-acid degradation; L-histidine degradation into L-glutamate; N-formimidoyl-L-glutamate from L-histidine: step 3/3. Its function is as follows. Catalyzes the hydrolytic cleavage of the carbon-nitrogen bond in imidazolone-5-propanoate to yield N-formimidoyl-L-glutamate. It is the third step in the universal histidine degradation pathway. The polypeptide is Imidazolonepropionase (Clostridium tetani (strain Massachusetts / E88)).